Reading from the N-terminus, the 60-residue chain is Large ribosomal subunit protein uL30 (60 aa).

It belongs to the universal ribosomal protein uL30 family. In terms of assembly, part of the 50S ribosomal subunit.

This chain is Large ribosomal subunit protein uL30, found in Staphylococcus epidermidis (strain ATCC 35984 / DSM 28319 / BCRC 17069 / CCUG 31568 / BM 3577 / RP62A).